We begin with the raw amino-acid sequence, 103 residues long: A-type ATP synthase subunit F (103 aa).

The protein belongs to the V-ATPase F subunit family. Has multiple subunits with at least A(3), B(3), C, D, E, F, H, I and proteolipid K(x).

Its subcellular location is the cell membrane. Component of the A-type ATP synthase that produces ATP from ADP in the presence of a proton gradient across the membrane. The protein is A-type ATP synthase subunit F of Pyrococcus abyssi (strain GE5 / Orsay).